The sequence spans 249 residues: Flavin-dependent thymidylate synthase (249 aa).

The region spanning leucine 7 to threonine 235 is the ThyX domain. Residues glutamate 94 to arginine 97, glutamine 105 to arginine 109, and arginine 174 each bind dUMP. Residues arginine 97 to arginine 99 and glutamine 105 each bind FAD. The short motif at arginine 97 to serine 107 is the ThyX motif element. FAD is bound by residues asparagine 190 to arginine 192 and histidine 196. Arginine 201 contributes to the dUMP binding site. Arginine 201 (involved in ionization of N3 of dUMP, leading to its activation) is an active-site residue.

It belongs to the thymidylate synthase ThyX family. As to quaternary structure, homotetramer. FAD is required as a cofactor.

The enzyme catalyses dUMP + (6R)-5,10-methylene-5,6,7,8-tetrahydrofolate + NADPH + H(+) = dTMP + (6S)-5,6,7,8-tetrahydrofolate + NADP(+). It participates in pyrimidine metabolism; dTTP biosynthesis. Functionally, catalyzes the reductive methylation of 2'-deoxyuridine-5'-monophosphate (dUMP) to 2'-deoxythymidine-5'-monophosphate (dTMP) while utilizing 5,10-methylenetetrahydrofolate (mTHF) as the methyl donor, and NADPH and FADH(2) as the reductant. This chain is Flavin-dependent thymidylate synthase, found in Corynebacterium aurimucosum (strain ATCC 700975 / DSM 44827 / CIP 107346 / CN-1) (Corynebacterium nigricans).